Here is a 377-residue protein sequence, read N- to C-terminus: MLSTKFTLRSHKSSVAYIYQDPRTPFNLFTADSSGLIINWDLTIRRPKKSWQAHTDTILTISTIHNHLLTHSRDNTIKIWDESYSCVLEIPCNALNFSNICIIYDLLITPASINSNNLDVYKIDKDWQITRLISDFDVYKLVNKGEIIEEIGSSGTSRNDFGIIMQMKIIHTNTTTTTSENNSDYIIYVGFESGDIVGLQLILPRARILSTTGNTNDKTLINQSAKFILQYHNSTHVPNPVICLSNLDSVLVSGSTTNKVIIHSDPIEIMKMDHSGIQAIVNFKNDRLIFGYWNGYIQYGDISINQSLPKLGNTEQEKSKLTKKLTFMTILNESNQETLQSPTGKSKYLALLKSKRNLVFPLLLAGYEDGSILAYNI.

WD repeat units lie at residues 10 to 50 (SHKS…PKKS), 53 to 90 (AHTD…VLEI), 230 to 262 (QYHN…KVII), 263 to 303 (HSDP…GDIS), and 342 to 377 (PTGK…AYNI).

It belongs to the WD repeat ASA1 family. As to quaternary structure, component of the ASTRA chromatin remodeling machinery complex.

The protein localises to the nucleus. Component of the ASTRA complex involved in chromatin remodeling. This is ASTRA-associated protein 1 (ASA1) from Candida albicans (strain SC5314 / ATCC MYA-2876) (Yeast).